Reading from the N-terminus, the 558-residue chain is uncharacterized protein (558 aa).

The segment at Asn531–Arg558 is disordered.

This is an uncharacterized protein from Saccharomyces cerevisiae (strain ATCC 204508 / S288c) (Baker's yeast).